A 627-amino-acid chain; its full sequence is Phosphomethylpyrimidine synthase (627 aa).

The segment at M1–Q21 is disordered. Substrate-binding positions include N231, M260, Y289, H325, S345–G347, D386–R389, and E425. H429 lines the Zn(2+) pocket. A substrate-binding site is contributed by Y452. H493 provides a ligand contact to Zn(2+). [4Fe-4S] cluster-binding residues include C573, C576, and C581.

It belongs to the ThiC family. Homodimer. The cofactor is [4Fe-4S] cluster.

The catalysed reaction is 5-amino-1-(5-phospho-beta-D-ribosyl)imidazole + S-adenosyl-L-methionine = 4-amino-2-methyl-5-(phosphooxymethyl)pyrimidine + CO + 5'-deoxyadenosine + formate + L-methionine + 3 H(+). Its pathway is cofactor biosynthesis; thiamine diphosphate biosynthesis. Catalyzes the synthesis of the hydroxymethylpyrimidine phosphate (HMP-P) moiety of thiamine from aminoimidazole ribotide (AIR) in a radical S-adenosyl-L-methionine (SAM)-dependent reaction. This is Phosphomethylpyrimidine synthase from Stutzerimonas stutzeri (strain A1501) (Pseudomonas stutzeri).